The sequence spans 452 residues: tRNA modification GTPase MnmE (452 aa).

3 residues coordinate (6S)-5-formyl-5,6,7,8-tetrahydrofolate: Arg-21, Glu-78, and Lys-118. In terms of domain architecture, TrmE-type G spans 214-375 (GMKVVIAGRP…LREHLKKSMG (162 aa)). Asn-224 lines the K(+) pocket. GTP contacts are provided by residues 224-229 (NAGKSS), 243-249 (TNIAGTT), and 268-271 (DTAG). Mg(2+) is bound at residue Ser-228. K(+)-binding residues include Thr-243, Ile-245, and Thr-248. Thr-249 lines the Mg(2+) pocket. Residue Lys-452 participates in (6S)-5-formyl-5,6,7,8-tetrahydrofolate binding.

The protein belongs to the TRAFAC class TrmE-Era-EngA-EngB-Septin-like GTPase superfamily. TrmE GTPase family. As to quaternary structure, homodimer. Heterotetramer of two MnmE and two MnmG subunits. K(+) is required as a cofactor.

The protein resides in the cytoplasm. Exhibits a very high intrinsic GTPase hydrolysis rate. Involved in the addition of a carboxymethylaminomethyl (cmnm) group at the wobble position (U34) of certain tRNAs, forming tRNA-cmnm(5)s(2)U34. The polypeptide is tRNA modification GTPase MnmE (Actinobacillus pleuropneumoniae serotype 3 (strain JL03)).